A 121-amino-acid chain; its full sequence is uncharacterized protein (121 aa).

Residues 65-84 traverse the membrane as a helical segment; the sequence is TILFYTPTLICFLFLQNFLY.

It localises to the membrane. This is an uncharacterized protein from Saccharomyces cerevisiae (strain ATCC 204508 / S288c) (Baker's yeast).